A 993-amino-acid chain; its full sequence is UPF0182 protein MAP_3291c (993 aa).

The next 7 helical transmembrane spans lie at 18–38 (ILIL…RLID), 63–83 (FVVF…GLAV), 113–133 (LVSV…AQSY), 175–195 (FVAV…FGGI), 210–230 (IQLV…YWLD), 254–274 (AVLP…AAVF), and 287–307 (IGLV…PLIV). Residues 903–941 (NIQPTEGGAPAASPPANAPAPAVTPGSAPPVAAPPVPDG) form a disordered region. Over residues 929 to 939 (SAPPVAAPPVP) the composition is skewed to pro residues.

Belongs to the UPF0182 family.

It is found in the cell membrane. In Mycolicibacterium paratuberculosis (strain ATCC BAA-968 / K-10) (Mycobacterium paratuberculosis), this protein is UPF0182 protein MAP_3291c.